The following is a 259-amino-acid chain: Global transcriptional regulator CodY (259 aa).

The interval 1–155 is GAF domain; it reads MDLLSKTRRI…GATVVGMEIL (155 aa). A DNA-binding region (H-T-H motif) is located at residues 203 to 222; sequence ASKIADRVGITRSVIVNALR.

The protein belongs to the CodY family.

The protein localises to the cytoplasm. In terms of biological role, DNA-binding global transcriptional regulator which is involved in the adaptive response to starvation and acts by directly or indirectly controlling the expression of numerous genes in response to nutrient availability. During rapid exponential growth, CodY is highly active and represses genes whose products allow adaptation to nutrient depletion. This is Global transcriptional regulator CodY from Brevibacillus brevis (strain 47 / JCM 6285 / NBRC 100599).